The chain runs to 514 residues: MDLRFQRGPSGEWKASVVLAFAFKGEDIRKQAQALIDVAPWLDIAPALNDFTGAAGETGVLYGHPKIAIPRIILCGLGERESYTAETLRKSVAAAMQKCRELKLETVGIDVQTLAGLPGDAARNVEEAVVSAYLPLYTYERFRTTRKEPLFTPSWISLFFAEDIDSTLRDAARRGESAAAGIFLTRDLVNGPANLVTPSFLEEQARKLAARYGFTVRSMTRQEIAAAGMGAFESVFKGAVEDARLLAIEYCPRGMEKEQPLVFVGKGVTFDTGGISLKPSANMGDMKSDMGGAGAIFGLFETIGQMGGQAGAASAGFTRRVIGVMPCTENMPDGQATRPGDVVTSLSGQTIEIINTDAEGRLILCDAMTWAQREYDPAVMVDLATLTGACLIALGTDVAAVFATDDALADTVRTRGGDVGDLYWRLPLWDRYFEDLKSDVADMKNVGGREGGTINAALFLKQFVDEGRRWAHLDIAGPAYRNKKSPLCPFGATGFAVRTLMQLALHGVPEPSGD.

Positions 266 and 271 each coordinate Mn(2+). Residue lysine 278 is part of the active site. Residues aspartate 289, aspartate 357, and glutamate 359 each contribute to the Mn(2+) site. The active site involves arginine 361.

The protein belongs to the peptidase M17 family. Mn(2+) is required as a cofactor.

It localises to the cytoplasm. The catalysed reaction is Release of an N-terminal amino acid, Xaa-|-Yaa-, in which Xaa is preferably Leu, but may be other amino acids including Pro although not Arg or Lys, and Yaa may be Pro. Amino acid amides and methyl esters are also readily hydrolyzed, but rates on arylamides are exceedingly low.. The enzyme catalyses Release of an N-terminal amino acid, preferentially leucine, but not glutamic or aspartic acids.. Presumably involved in the processing and regular turnover of intracellular proteins. Catalyzes the removal of unsubstituted N-terminal amino acids from various peptides. The protein is Probable cytosol aminopeptidase of Oleidesulfovibrio alaskensis (strain ATCC BAA-1058 / DSM 17464 / G20) (Desulfovibrio alaskensis).